The sequence spans 652 residues: Replication protein E1 (652 aa).

The Nuclear localization signal signature appears at 86–88 (KRK). Ser92 bears the Phosphoserine; by host mark. Residues 153-173 (NNTNGEEEGENGGENGGSIRE) form a disordered region. The DNA-binding region stretch occupies residues 188 to 354 (DPQSPTAQLK…LTVIQHGIDD (167 aa)). The SF3 helicase domain occupies 453–603 (VEFITFLCAF…FPFDQNRNPV (151 aa)). Position 479–486 (479–486 (GPPNTGKS)) interacts with ATP. Residue Lys560 forms a Glycyl lysine isopeptide (Lys-Gly) (interchain with G-Cter in SUMO) linkage.

The protein belongs to the papillomaviridae E1 protein family. As to quaternary structure, can form hexamers. Interacts with E2 protein; this interaction increases E1 DNA binding specificity. Interacts with host DNA polymerase subunit POLA2. Interacts with host single stranded DNA-binding protein RPA1. Interacts with host TOP1; this interaction stimulates the enzymatic activity of TOP1. In terms of processing, phosphorylated. Sumoylated.

It localises to the host nucleus. The enzyme catalyses Couples ATP hydrolysis with the unwinding of duplex DNA by translocating in the 3'-5' direction.. It catalyses the reaction ATP + H2O = ADP + phosphate + H(+). Its function is as follows. ATP-dependent DNA 3'-5' helicase required for initiation of viral DNA replication. It forms a complex with the viral E2 protein. The E1-E2 complex binds to the replication origin which contains binding sites for both proteins. During the initial step, a dimer of E1 interacts with a dimer of protein E2 leading to a complex that binds the viral origin of replication with high specificity. Then, a second dimer of E1 displaces the E2 dimer in an ATP-dependent manner to form the E1 tetramer. Following this, two E1 monomers are added to each half of the site, which results in the formation of two E1 trimers on the viral ori. Subsequently, two hexamers will be created. The double hexamer acts as a bi-directional helicase machinery and unwinds the viral DNA and then recruits the host DNA polymerase to start replication. This Human papillomavirus type 70 protein is Replication protein E1.